A 197-amino-acid polypeptide reads, in one-letter code: Recombination protein RecR (197 aa).

A C4-type zinc finger spans residues 56-71 (CQQCRTLTEQALCNIC). Positions 79–174 (KELCIVETPA…KVSRIAHGIP (96 aa)) constitute a Toprim domain.

This sequence belongs to the RecR family.

In terms of biological role, may play a role in DNA repair. It seems to be involved in an RecBC-independent recombinational process of DNA repair. It may act with RecF and RecO. In Saccharophagus degradans (strain 2-40 / ATCC 43961 / DSM 17024), this protein is Recombination protein RecR.